A 714-amino-acid polypeptide reads, in one-letter code: Polyribonucleotide nucleotidyltransferase (714 aa).

2 residues coordinate Mg(2+): D488 and D494. Residues 555-614 (PRIEVMNIPTDKIRDVIGSGGKVIREIVEKTGAKINIEDDGTVKIASSNGKEIEAAKKWI) form the KH domain. The S1 motif domain maps to 624–692 (GEIYEGTVVK…ERGKVRLSMK (69 aa)).

The protein belongs to the polyribonucleotide nucleotidyltransferase family. Mg(2+) is required as a cofactor.

It localises to the cytoplasm. The enzyme catalyses RNA(n+1) + phosphate = RNA(n) + a ribonucleoside 5'-diphosphate. Functionally, involved in mRNA degradation. Catalyzes the phosphorolysis of single-stranded polyribonucleotides processively in the 3'- to 5'-direction. The sequence is that of Polyribonucleotide nucleotidyltransferase from Brucella abortus biovar 1 (strain 9-941).